Reading from the N-terminus, the 363-residue chain is Type-2 angiotensin II receptor (363 aa).

Topologically, residues Met1–Glu45 are extracellular. Residues Asn4, Asn13, Asn24, Asn29, and Asn34 are each glycosylated (N-linked (GlcNAc...) asparagine). Intrachain disulfides connect Cys35–Cys290 and Cys117–Cys195. A helical transmembrane segment spans residues Ala46–Cys70. At Cys71–Ser80 the chain is on the cytoplasmic side. Residues Ile81 to Tyr104 traverse the membrane as a helical segment. Tyr103 and Tyr104 together coordinate angiotensin II. The Extracellular segment spans residues Ser105 to Pro114. The helical transmembrane segment at Val115 to Val140 threads the bilayer. Over Asp141 to Gln159 the chain is Cytoplasmic. Residues Ala160–Phe181 form a helical membrane-spanning segment. Positions 182, 204, and 215 each coordinate angiotensin II. Over Arg182–Gln206 the chain is Extracellular. A helical transmembrane segment spans residues Trp207 to Phe232. Topologically, residues Gly233 to Met257 are cytoplasmic. A helical membrane pass occupies residues Ala258–Leu281. Asp279 contributes to the angiotensin II binding site. Residues Thr282–Ala294 are Extracellular-facing. The chain crosses the membrane as a helical span at residues Val295–Phe320. Asp297 lines the angiotensin II pocket. The Cytoplasmic segment spans residues Val321–Ser363. The segment at Arg324–Phe333 is helix VIII. Ser354 is subject to Phosphoserine; by PKC.

Belongs to the G-protein coupled receptor 1 family. In terms of assembly, interacts with MTUS1. Abundant expression in fetal tissues, immature brain, skin wound and atretic ovarian follicles.

The protein localises to the cell membrane. Its function is as follows. Receptor for angiotensin II, a vasoconstricting peptide. Signals primarily via a non-canonical G-protein- and beta-arrestin independent pathways. Cooperates with MTUS1 to inhibit ERK2 activation and cell proliferation. The sequence is that of Type-2 angiotensin II receptor from Rattus norvegicus (Rat).